Consider the following 1184-residue polypeptide: DNA-directed RNA polymerase subunit beta (1184 aa).

Residues 1160 to 1184 (DDDFTNQNDAFNIVQPENAAAEKTE) form a disordered region.

The protein belongs to the RNA polymerase beta chain family. As to quaternary structure, the RNAP catalytic core consists of 2 alpha, 1 beta, 1 beta' and 1 omega subunit. When a sigma factor is associated with the core the holoenzyme is formed, which can initiate transcription.

It catalyses the reaction RNA(n) + a ribonucleoside 5'-triphosphate = RNA(n+1) + diphosphate. DNA-dependent RNA polymerase catalyzes the transcription of DNA into RNA using the four ribonucleoside triphosphates as substrates. This Listeria welshimeri serovar 6b (strain ATCC 35897 / DSM 20650 / CCUG 15529 / CIP 8149 / NCTC 11857 / SLCC 5334 / V8) protein is DNA-directed RNA polymerase subunit beta.